We begin with the raw amino-acid sequence, 699 residues long: Methylcrotonoyl-CoA carboxylase subunit alpha, mitochondrial (699 aa).

Residues 30–475 (ITKILIANRG…ETGFIPIHRE (446 aa)) form the Biotin carboxylation domain. Positions 144, 228, and 263 each coordinate ATP. The ATP-grasp domain maps to 148–345 (KDIMIKAGVP…LVEWQLKVAE (198 aa)). Residue R320 is part of the active site. The region spanning 624-699 (KGADGVLGSL…EDKKTLAVIV (76 aa)) is the Biotinyl-binding domain. The residue at position 665 (K665) is an N6-biotinyllysine.

Probably a dodecamer composed of six biotin-containing alpha subunits and six beta subunits. Mn(2+) is required as a cofactor. Biotin serves as cofactor.

It is found in the mitochondrion matrix. It carries out the reaction 3-methylbut-2-enoyl-CoA + hydrogencarbonate + ATP = 3-methyl-(2E)-glutaconyl-CoA + ADP + phosphate + H(+). It participates in amino-acid degradation; L-leucine degradation; (S)-3-hydroxy-3-methylglutaryl-CoA from 3-isovaleryl-CoA: step 2/3. Functionally, biotin-attachment subunit of the 3-methylcrotonyl-CoA carboxylase, an enzyme that catalyzes the conversion of 3-methylcrotonyl-CoA to 3-methylglutaconyl-CoA, a critical step for leucine and isovaleric acid catabolism. This Dictyostelium discoideum (Social amoeba) protein is Methylcrotonoyl-CoA carboxylase subunit alpha, mitochondrial (mccA).